The sequence spans 253 residues: Phosphate import ATP-binding protein PstB 1 (253 aa).

The 242-residue stretch at 7–248 (LQIRDLSVYY…PKRKETEDYI (242 aa)) folds into the ABC transporter domain. 39 to 46 (GPSGSGKS) serves as a coordination point for ATP.

The protein belongs to the ABC transporter superfamily. Phosphate importer (TC 3.A.1.7) family. As to quaternary structure, the complex is composed of two ATP-binding proteins (PstB), two transmembrane proteins (PstC and PstA) and a solute-binding protein (PstS).

Its subcellular location is the cell membrane. It carries out the reaction phosphate(out) + ATP + H2O = ADP + 2 phosphate(in) + H(+). Functionally, part of the ABC transporter complex PstSACB involved in phosphate import. Responsible for energy coupling to the transport system. The protein is Phosphate import ATP-binding protein PstB 1 of Streptococcus pyogenes serotype M2 (strain MGAS10270).